Reading from the N-terminus, the 563-residue chain is Putative solute carrier family 26 member 10P (563 aa).

The next 5 membrane-spanning stretches (helical) occupy residues 45–65, 75–91, 116–136, 152–172, and 352–372; these read ALLA…PVLI, LSTG…GSAV, VGVA…MFVL, ALTS…LLGL, and LAGL…GPFF. The 136-residue stretch at 406–541 folds into the STAS domain; it reads RVDFLLQVPG…VSVQDAAAYA (136 aa).

Belongs to the SLC26A/SulP transporter (TC 2.A.53) family.

It localises to the membrane. Chloride/bicarbonate exchanger. This is Putative solute carrier family 26 member 10P (SLC26A10P) from Homo sapiens (Human).